The following is a 1396-amino-acid chain: DNA-directed RNA polymerase subunit beta' (1396 aa).

The Zn(2+) site is built by Cys-73, Cys-75, Cys-88, and Cys-91. Positions 467, 469, and 471 each coordinate Mg(2+). Zn(2+) is bound by residues Cys-817, Cys-891, Cys-898, and Cys-901.

Belongs to the RNA polymerase beta' chain family. The RNAP catalytic core consists of 2 alpha, 1 beta, 1 beta' and 1 omega subunit. When a sigma factor is associated with the core the holoenzyme is formed, which can initiate transcription. It depends on Mg(2+) as a cofactor. The cofactor is Zn(2+).

It catalyses the reaction RNA(n) + a ribonucleoside 5'-triphosphate = RNA(n+1) + diphosphate. DNA-dependent RNA polymerase catalyzes the transcription of DNA into RNA using the four ribonucleoside triphosphates as substrates. This chain is DNA-directed RNA polymerase subunit beta', found in Orientia tsutsugamushi (strain Boryong) (Rickettsia tsutsugamushi).